A 387-amino-acid chain; its full sequence is EARP and GARP complex-interacting protein 1 (387 aa).

M1 bears the N-acetylmethionine mark. 6 WD repeats span residues 4–48 (DAPV…IIDF), 55–101 (INKN…VWRM), 124–164 (ELLC…LWDL), 172–214 (VLAS…GWDT), 219–258 (QIYC…FWDT), and 263–302 (EPVK…LSNM). Positions 310-335 (FGHLVDDDDISDQEDHRSEEKSKEPL) are disordered. S320 is modified (phosphoserine). Residues 322–335 (QEDHRSEEKSKEPL) show a composition bias toward basic and acidic residues. The stretch at 338–379 (NVIATYEEHEDSVYAVDWSSADPWLFASLSYDGRLVINRVPR) is one WD 7 repeat.

The protein belongs to the WD repeat EIPR1 family. Interacts with two multisubunit tethering complexes: EARP composed of VPS50, VPS51, VPS52 and VPS53 subunits and GARP complex composed of VPS51, VPS52, VPS53 and VPS54 subunits. Interacts with SNAP29.

It localises to the golgi apparatus. It is found in the trans-Golgi network. Functionally, acts as a component of endosomal retrieval machinery that is involved in protein transport from early endosomes to either recycling endosomes or the trans-Golgi network. Mediates the recruitment of Golgi-associated retrograde protein (GARP) complex to the trans-Golgi network and controls early endosome-to-Golgi transport of internalized protein. Promotes the recycling of internalized transferrin receptor (TFRC) to the plasma membrane through interaction with endosome-associated recycling protein (EARP) complex. Controls proper insulin distribution and secretion, and retention of cargo in mature dense core vesicles. Required for the stability of the endosome-associated retrograde protein (EARP) complex subunits and for proper localization and association of EARP with membranes. The sequence is that of EARP and GARP complex-interacting protein 1 from Homo sapiens (Human).